Here is a 160-residue protein sequence, read N- to C-terminus: Single-stranded DNA-binding protein 3 (160 aa).

The region spanning 2 to 104 (MNRVVLVGRL…IVAESVQFLE (103 aa)) is the SSB domain. Polar residues predominate over residues 106-133 (KQNGAGGSTSNNNQSETNYSNDNKTSSY). Residues 106 to 160 (KQNGAGGSTSNNNQSETNYSNDNKTSSYRADRSQNGDSFANEGAPVDINPDDLPF) are disordered.

Homotetramer.

The protein is Single-stranded DNA-binding protein 3 (ssb3) of Listeria innocua serovar 6a (strain ATCC BAA-680 / CLIP 11262).